A 93-amino-acid polypeptide reads, in one-letter code: UPF0473 protein YrzB (93 aa).

Belongs to the UPF0473 family.

The protein is UPF0473 protein YrzB (yrzB) of Bacillus subtilis (strain 168).